Here is a 92-residue protein sequence, read N- to C-terminus: Large ribosomal subunit protein bL25 (92 aa).

This sequence belongs to the bacterial ribosomal protein bL25 family. Part of the 50S ribosomal subunit; part of the 5S rRNA/L5/L18/L25 subcomplex. Contacts the 5S rRNA. Binds to the 5S rRNA independently of L5 and L18.

Its function is as follows. This is one of the proteins that binds to the 5S RNA in the ribosome where it forms part of the central protuberance. The polypeptide is Large ribosomal subunit protein bL25 (Aliivibrio fischeri (strain ATCC 700601 / ES114) (Vibrio fischeri)).